The chain runs to 370 residues: NADH-quinone oxidoreductase subunit D 2 (370 aa).

Belongs to the complex I 49 kDa subunit family. NDH-1 is composed of 14 different subunits. Subunits NuoB, C, D, E, F, and G constitute the peripheral sector of the complex.

It is found in the cell membrane. It catalyses the reaction a quinone + NADH + 5 H(+)(in) = a quinol + NAD(+) + 4 H(+)(out). NDH-1 shuttles electrons from NADH, via FMN and iron-sulfur (Fe-S) centers, to quinones in the respiratory chain. The immediate electron acceptor for the enzyme in this species is believed to be ubiquinone. Couples the redox reaction to proton translocation (for every two electrons transferred, four hydrogen ions are translocated across the cytoplasmic membrane), and thus conserves the redox energy in a proton gradient. The protein is NADH-quinone oxidoreductase subunit D 2 of Herpetosiphon aurantiacus (strain ATCC 23779 / DSM 785 / 114-95).